The chain runs to 37 residues: Potassium channel toxin alpha-KTx 3.13 (37 aa).

3 disulfide bridges follow: Cys7/Cys27, Cys13/Cys32, and Cys17/Cys34. Lysine amide is present on Lys37.

The protein belongs to the short scorpion toxin superfamily. Potassium channel inhibitor family. Alpha-KTx 03 subfamily. In terms of tissue distribution, expressed by the venom gland.

The protein localises to the secreted. Functionally, blocks voltage-gated potassium channels Kv1.1/KCNA1 (IC(50)=203.15 pM), Kv1.2/KCNA2 (IC(50)=8.92 nM) from rat and human Kv1.3 KCNA3/KCNA3 (IC(50)=171 pM) potently. At 2 uM, also blocks Shaker IR and has a moderate effect on rat Kv1.6/KCNA6. The polypeptide is Potassium channel toxin alpha-KTx 3.13 (Mesobuthus eupeus (Lesser Asian scorpion)).